Reading from the N-terminus, the 129-residue chain is Small ribosomal subunit protein uS9 (129 aa).

Belongs to the universal ribosomal protein uS9 family.

The protein is Small ribosomal subunit protein uS9 of Chlorobium phaeobacteroides (strain DSM 266 / SMG 266 / 2430).